The following is a 142-amino-acid chain: Acidic phospholipase A2 Bc-PL (142 aa).

The signal sequence occupies residues alanine 1 to alanine 9. Residues alanine 10–leucine 17 constitute a propeptide that is removed on maturation. Intrachain disulfides connect cysteine 28-cysteine 94, cysteine 44-cysteine 141, cysteine 46-cysteine 62, cysteine 61-cysteine 122, cysteine 68-cysteine 115, cysteine 78-cysteine 108, and cysteine 101-cysteine 113. Ca(2+) is bound by residues tyrosine 45, glycine 47, and glycine 49. The active site involves histidine 65. Position 66 (aspartate 66) interacts with Ca(2+). Aspartate 116 is a catalytic residue.

This sequence belongs to the phospholipase A2 family. Group I subfamily. D49 sub-subfamily. Ca(2+) serves as cofactor. In terms of tissue distribution, expressed by the venom gland.

The protein resides in the secreted. The catalysed reaction is a 1,2-diacyl-sn-glycero-3-phosphocholine + H2O = a 1-acyl-sn-glycero-3-phosphocholine + a fatty acid + H(+). Functionally, PLA2 catalyzes the calcium-dependent hydrolysis of the 2-acyl groups in 3-sn-phosphoglycerides. The protein is Acidic phospholipase A2 Bc-PL of Bungarus candidus (Malayan krait).